A 127-amino-acid chain; its full sequence is Apolipoprotein C-IV (127 aa).

The first 27 residues, 1-27 (MSLLRNRLQDLPALCLCVLVLACIGAC), serve as a signal peptide directing secretion.

Belongs to the apolipoprotein C4 family.

It localises to the secreted. May participate in lipoprotein metabolism. This chain is Apolipoprotein C-IV (APOC4), found in Chlorocebus sabaeus (Green monkey).